We begin with the raw amino-acid sequence, 179 residues long: Peroxiredoxin (179 aa).

Residues 2–152 (TMEKQVPIVT…VEGWFEEEGF (151 aa)) form the Thioredoxin domain. Cys56 functions as the Cysteine sulfenic acid (-SOH) intermediate (for peroxiredoxin activity) in the catalytic mechanism.

This sequence belongs to the peroxiredoxin family. Prx5 subfamily. In terms of assembly, monomer.

It catalyses the reaction a hydroperoxide + 2 glutathione = an alcohol + glutathione disulfide + H2O. Thiol-specific peroxidase that catalyzes the reduction of hydrogen peroxide and organic hydroperoxides to water and alcohols, respectively. Plays a role in cell protection against oxidative stress by detoxifying peroxides. The protein is Peroxiredoxin of Rhizobium etli.